A 252-amino-acid chain; its full sequence is Segregation and condensation protein A (252 aa).

The tract at residues 117-136 (EREEERQNAFTKPPSDLSEF) is disordered.

It belongs to the ScpA family. As to quaternary structure, component of a cohesin-like complex composed of ScpA, ScpB and the Smc homodimer, in which ScpA and ScpB bind to the head domain of Smc. The presence of the three proteins is required for the association of the complex with DNA.

The protein localises to the cytoplasm. Its function is as follows. Participates in chromosomal partition during cell division. May act via the formation of a condensin-like complex containing Smc and ScpB that pull DNA away from mid-cell into both cell halves. This chain is Segregation and condensation protein A, found in Bacillus pumilus (strain SAFR-032).